Reading from the N-terminus, the 1405-residue chain is Tonsoku-like protein (1405 aa).

7 TPR repeats span residues 23–56, 63–96, 163–196, 203–237, 245–278, 314–347, and 355–388; these read AVSC…YASM, AKAK…AKRL, ARCY…SKTH, HLCY…AKRF, CETL…NTPD, KGLY…AELN, and VPIY…NQDA. Residues 153 to 181 form an LRR 1 repeat; that stretch reads ISKLEQLDMQARCYLNIGVVKEHMEAFQE. One copy of the LRR 2 repeat lies at 439-465; sequence MVRLRRLMLKHNMQVLVENLEADATAK. Residues 465–535 are disordered; the sequence is KGIDLDQEES…RGNRTLVIKK (71 aa). The span at 469-483 shows a compositional bias: acidic residues; that stretch reads LDQEESVGDDEEESD. ANK repeat units lie at residues 538-567, 571-600, and 609-638; these read KGET…TVNV, AGWL…ASAI, and DGIT…DATV. 3 disordered regions span residues 695 to 753, 806 to 827, and 841 to 880; these read FNAK…KEYR, KRIN…DTAL, and TPEN…KKHQ. Residues S707 and S709 each carry the phosphoserine modification. Over residues 813–822 the composition is skewed to basic and acidic residues; that stretch reads LSRRTSKENF. Positions 841-850 are enriched in polar residues; sequence TPENEYSQRQ. The span at 859-874 shows a compositional bias: low complexity; the sequence is SRSSSMSSNHSSSATS. A phosphoserine mark is found at S893, S895, S899, and S902. 6 LRR repeats span residues 1085–1108, 1113–1137, 1143–1166, 1186–1211, 1287–1311, and 1333–1357; these read QARL…QLAK, LLQL…LLCG, LELL…ILSK, LTEL…QLTQ, AKQL…YILD, and LQKL…VFSM.

Belongs to the Tonsoku family.

Its subcellular location is the nucleus. The protein localises to the nucleoplasm. It localises to the chromosome. Histone reader involved in homologous recombination-mediated repair of double-strand breaks (DSBs) at stalled or collapsed replication forks. Specifically recognizes and binds histone H3.1. The polypeptide is Tonsoku-like protein (Drosophila melanogaster (Fruit fly)).